The chain runs to 124 residues: Galanin peptides (124 aa).

The signal sequence occupies residues 1–19 (MARGSVILLAWLLLVATLS). Residues 20-30 (ATLGLGMPTKE) constitute a propeptide that is removed on maturation. T61 carries the post-translational modification Threonine amide. A phosphoserine mark is found at S117 and S118.

Belongs to the galanin family.

It is found in the secreted. In terms of biological role, endocrine hormone of the central and peripheral nervous systems that binds and activates the G protein-coupled receptors GALR1, GALR2, and GALR3. This small neuropeptide may regulate diverse physiologic functions including contraction of smooth muscle of the gastrointestinal and genitourinary tract, growth hormone and insulin release and adrenal secretion. This chain is Galanin peptides (Gal), found in Rattus norvegicus (Rat).